The chain runs to 448 residues: Oxysterol-binding protein homolog 6 (448 aa).

The tract at residues 1 to 42 (MGSKKLTVGSDSHRLSKSSFSSNKSSHSATKDQPIDTDDIDE) is disordered. A Phosphoserine modification is found at serine 16. The segment covering 17 to 28 (KSSFSSNKSSHS) has biased composition (low complexity). Residues 54–391 (IISQLRPGCD…PGEDLDYCIY (338 aa)) are OSBP-related domain (ORD). Residues 64-69 (LTRITL), 126-129 (KPLN), and 157-158 (HH) each bind a 1,2-diacyl-sn-glycero-3-phospho-(1D-myo-inositol 4-phosphate). Residues 64 to 69 (LTRITL) and asparagine 129 contribute to the a 1,2-diacyl-sn-glycero-3-phospho-L-serine site. Serine 183 is an a 1,2-diacyl-sn-glycero-3-phospho-L-serine binding site. Residues lysine 351, glutamate 355, and arginine 359 each coordinate a 1,2-diacyl-sn-glycero-3-phospho-(1D-myo-inositol 4-phosphate).

This sequence belongs to the OSBP family. In terms of assembly, interacts with the AAA ATPase VPS4; regulates OSH6 membrane association. VPS4 is required for membrane dissociation of OSH6.

It is found in the cytoplasm. The protein resides in the cell membrane. It localises to the endoplasmic reticulum membrane. It catalyses the reaction a 1,2-diacyl-sn-glycero-3-phospho-L-serine(in) = a 1,2-diacyl-sn-glycero-3-phospho-L-serine(out). Functionally, lipid transport protein (LTP) involved in non-vesicular transfer of lipids between membranes. Functions in phosphoinositide-coupled directional transport of various lipids by carrying the lipid molecule in a hydrophobic pocket and transferring it between membranes through the cytosol. Involved in maintenance of intracellular sterol distribution and homeostasis. Catalyzes the lipid countertransport between the endoplasmic reticulum (ER) and the plasma membrane (PM). Specifically exchanges phosphatidylserine (PS) with phosphatidylinositol 4-phosphate (PI4P), delivering phosphatidylserine to the PM in exchange for PI4P, which is delivered to the ER-localized PI4P phosphatase SAC1 for degradation. Thus, by maintaining a PI4P gradient at the ER/PM interface, SAC1 drives PS transport. Binds phosphatidylserine and PI4P in a mutually exclusive manner. Also binds phosphatidic acid (PA). The sequence is that of Oxysterol-binding protein homolog 6 from Saccharomyces cerevisiae (strain ATCC 204508 / S288c) (Baker's yeast).